The primary structure comprises 325 residues: Tetraacyldisaccharide 4'-kinase (325 aa).

Position 55 to 62 (55 to 62 (TAGGNGKT)) interacts with ATP.

This sequence belongs to the LpxK family.

It catalyses the reaction a lipid A disaccharide + ATP = a lipid IVA + ADP + H(+). The protein operates within glycolipid biosynthesis; lipid IV(A) biosynthesis; lipid IV(A) from (3R)-3-hydroxytetradecanoyl-[acyl-carrier-protein] and UDP-N-acetyl-alpha-D-glucosamine: step 6/6. Transfers the gamma-phosphate of ATP to the 4'-position of a tetraacyldisaccharide 1-phosphate intermediate (termed DS-1-P) to form tetraacyldisaccharide 1,4'-bis-phosphate (lipid IVA). The chain is Tetraacyldisaccharide 4'-kinase from Cronobacter sakazakii (strain ATCC BAA-894) (Enterobacter sakazakii).